A 206-amino-acid chain; its full sequence is MISSLRGDVIDKGLDYVVIECGGVGYRCLATGDTLATLRRGESAFVLTSLVIRDDAHTLYAFSTSEQRETFGILQKVSGVGARLAMGVMSVLQPADIARAVEEGDIKTLQQAPGVGKRLAERMAVDLKGKFPALEATSGQATIGDIAATGNDTALQSQVVEALVGLGFTEAKAATAVKKILEEQNGTTDPSSVLREALQRLSGQKR.

Positions 1 to 63 (MISSLRGDVI…DDAHTLYAFS (63 aa)) are domain I. The segment at 64 to 142 (TSEQRETFGI…ALEATSGQAT (79 aa)) is domain II. The tract at residues 143 to 150 (IGDIAATG) is flexible linker. The domain III stretch occupies residues 151–206 (NDTALQSQVVEALVGLGFTEAKAATAVKKILEEQNGTTDPSSVLREALQRLSGQKR).

It belongs to the RuvA family. Homotetramer. Forms an RuvA(8)-RuvB(12)-Holliday junction (HJ) complex. HJ DNA is sandwiched between 2 RuvA tetramers; dsDNA enters through RuvA and exits via RuvB. An RuvB hexamer assembles on each DNA strand where it exits the tetramer. Each RuvB hexamer is contacted by two RuvA subunits (via domain III) on 2 adjacent RuvB subunits; this complex drives branch migration. In the full resolvosome a probable DNA-RuvA(4)-RuvB(12)-RuvC(2) complex forms which resolves the HJ.

The protein resides in the cytoplasm. The RuvA-RuvB-RuvC complex processes Holliday junction (HJ) DNA during genetic recombination and DNA repair, while the RuvA-RuvB complex plays an important role in the rescue of blocked DNA replication forks via replication fork reversal (RFR). RuvA specifically binds to HJ cruciform DNA, conferring on it an open structure. The RuvB hexamer acts as an ATP-dependent pump, pulling dsDNA into and through the RuvAB complex. HJ branch migration allows RuvC to scan DNA until it finds its consensus sequence, where it cleaves and resolves the cruciform DNA. This Corynebacterium urealyticum (strain ATCC 43042 / DSM 7109) protein is Holliday junction branch migration complex subunit RuvA.